The following is a 916-amino-acid chain: Protein translocase subunit SecA (916 aa).

Residues glutamine 87, 105–109 (GEGKT), and aspartate 507 contribute to the ATP site. Zn(2+) is bound by residues cysteine 900, cysteine 902, cysteine 911, and histidine 912.

Belongs to the SecA family. In terms of assembly, monomer and homodimer. Part of the essential Sec protein translocation apparatus which comprises SecA, SecYEG and auxiliary proteins SecDF-YajC and YidC. The cofactor is Zn(2+).

The protein resides in the cell inner membrane. Its subcellular location is the cytoplasm. The enzyme catalyses ATP + H2O + cellular proteinSide 1 = ADP + phosphate + cellular proteinSide 2.. Functionally, part of the Sec protein translocase complex. Interacts with the SecYEG preprotein conducting channel. Has a central role in coupling the hydrolysis of ATP to the transfer of proteins into and across the cell membrane, serving both as a receptor for the preprotein-SecB complex and as an ATP-driven molecular motor driving the stepwise translocation of polypeptide chains across the membrane. The sequence is that of Protein translocase subunit SecA from Neisseria gonorrhoeae (strain ATCC 700825 / FA 1090).